The sequence spans 340 residues: Cytosolic Fe-S cluster assembly factor NBP35 (340 aa).

Residues 1–41 (MPSLVDPVANKTDEGNNRTDLKAPEPEHCPGTESEEAGKAD) form a disordered region. The span at 11–30 (KTDEGNNRTDLKAPEPEHCP) shows a compositional bias: basic and acidic residues. [4Fe-4S] cluster contacts are provided by cysteine 29, cysteine 43, cysteine 46, and cysteine 52. Residue 82–89 (GKGGVGKS) coordinates ATP. Positions 255 and 258 each coordinate [4Fe-4S] cluster.

The protein belongs to the Mrp/NBP35 ATP-binding proteins family. NUBP1/NBP35 subfamily. In terms of assembly, heterotetramer of 2 NBP35 and 2 CFD1 chains. Requires [4Fe-4S] cluster as cofactor.

Its subcellular location is the cytoplasm. It localises to the nucleus. Functionally, component of the cytosolic iron-sulfur (Fe/S) protein assembly (CIA) machinery. Required for maturation of extramitochondrial Fe-S proteins. The NBP35-CFD1 heterotetramer forms a Fe-S scaffold complex, mediating the de novo assembly of an Fe-S cluster and its transfer to target apoproteins. Required for biogenesis and export of both ribosomal subunits, which may reflect a role in assembly of the Fe/S clusters in RLI1, a protein which performs rRNA processing and ribosome export. This Yarrowia lipolytica (strain CLIB 122 / E 150) (Yeast) protein is Cytosolic Fe-S cluster assembly factor NBP35.